Reading from the N-terminus, the 62-residue chain is Conotoxin Pn-B0151 (62 aa).

Positions 1–22 are cleaved as a signal peptide; sequence MRCLPVFVILLLLIASTPSVDA. Positions 23 to 48 are excised as a propeptide; the sequence is LQKTKDDMPLASFHDNVKRILQTLSN.

The protein belongs to the conotoxin T superfamily. Post-translationally, contains 2 disulfide bonds that can be either 'C1-C3, C2-C4' or 'C1-C4, C2-C3', since these disulfide connectivities have been observed for conotoxins with cysteine framework V (for examples, see AC P0DQQ7 and AC P81755). In terms of tissue distribution, expressed by the venom duct.

It localises to the secreted. The sequence is that of Conotoxin Pn-B0151 from Conus pennaceus (Feathered cone).